Here is a 984-residue protein sequence, read N- to C-terminus: G patch domain-containing protein TGH homolog (984 aa).

Residues 130–144 show a composition bias toward basic and acidic residues; that stretch reads EHARKQASKEQKERP. The disordered stretch occupies residues 130-153; that stretch reads EHARKQASKEQKERPSAIPGPIPD. The G-patch domain occupies 160–202; that stretch reads TTSIGVKLLMKMGWRQGRSIRDAHADSLYESRREARKAFLALS. The SURP motif repeat unit spans residues 408-450; the sequence is LIEGCAAMVARCGKHIEDFYKEKSKTNTQFNFLNEGDGCSYYA. 4 disordered regions span residues 464 to 503, 679 to 717, 775 to 806, and 820 to 984; these read QKPDTVQSKSSDKLTAENRGKILGERPLDRSTKSSSSSFP, TRTNEVESSSIAPQHTSVAGATETEAKGAATDPEIESSS, LGLDVPPEKPTPPNVLFRSETPSTANAIGISR, and ESAL…HHKR. Positions 473–495 are enriched in basic and acidic residues; the sequence is SSDKLTAENRGKILGERPLDRST. Positions 679 to 695 are enriched in polar residues; the sequence is TRTNEVESSSIAPQHTS. The span at 697 to 709 shows a compositional bias: low complexity; that stretch reads AGATETEAKGAAT. Positions 814-859 form a coiled coil; that stretch reads QEIKENESALDKEEIANASADVPSDNVEELGLKYEKQEHRAEKSRS. The span at 843–858 shows a compositional bias: basic and acidic residues; that stretch reads LGLKYEKQEHRAEKSR. 3 stretches are compositionally biased toward basic residues: residues 882–892, 905–922, and 934–946; these read SRERRSRHKIR, HRSKKRKSHSKHRTRRSR, and TKRKHREKRHHRT. A compositionally biased stretch (basic and acidic residues) spans 947-974; that stretch reads RNPDTDSSDHEYEERHKSSSRRSSDKDR. Basic residues predominate over residues 975–984; that stretch reads SRRRSRHHKR.

The protein localises to the nucleus. Functions as a component of microRNA (miRNA) and small interfering RNA (siRNA) biogenesis. May assist Dicer-like (DCL) proteins to efficiently process and/or recruit the precursors of miRNAs and siRNAs. The sequence is that of G patch domain-containing protein TGH homolog from Oryza sativa subsp. japonica (Rice).